Reading from the N-terminus, the 160-residue chain is MTDNNAPGAMTFALKLLGLRSHSKDELKRKLLKKGYSAEGIEPVIEKLSRMGALDDHAFGMEVIRSRSRRKPSGRLKIVAELRKKGVAETIISELLKEYDSVALCHRAAEKKLASLREMSEADRKRKLEVFLSNRGFEWQEIQSALRLLVLPGADDDEPC.

Belongs to the RecX family.

The protein resides in the cytoplasm. In terms of biological role, modulates RecA activity. The sequence is that of Regulatory protein RecX from Pelodictyon phaeoclathratiforme (strain DSM 5477 / BU-1).